We begin with the raw amino-acid sequence, 274 residues long: MSRIANTFAKTKKENRAALIAFLTAGDPSIEATPALLDSLVENGVDIIELGMPFSDPMADGPAIQKANLRALAAKTGYNDIFRIATEFRKRHPETPLILMGYANPMTFKGSDSFAASAKEAGVDGIICVDIPPEEDATLGVAVREKGMDMIRLATPTSDEARLKIILDGASGFLYYVSVAGVTGLQQATEASIDAALDRIKAVTDLPVAVGFGIRSPEQAAAIAKKADAVVVGSAFVSCIEKAVTNRQDPNAALEKLAKELSTAISDARKEAAL.

Active-site proton acceptor residues include E49 and D60.

Belongs to the TrpA family. In terms of assembly, tetramer of two alpha and two beta chains.

The catalysed reaction is (1S,2R)-1-C-(indol-3-yl)glycerol 3-phosphate + L-serine = D-glyceraldehyde 3-phosphate + L-tryptophan + H2O. The protein operates within amino-acid biosynthesis; L-tryptophan biosynthesis; L-tryptophan from chorismate: step 5/5. The alpha subunit is responsible for the aldol cleavage of indoleglycerol phosphate to indole and glyceraldehyde 3-phosphate. This is Tryptophan synthase alpha chain from Zymomonas mobilis subsp. mobilis (strain ATCC 31821 / ZM4 / CP4).